We begin with the raw amino-acid sequence, 362 residues long: 2-aminoethylphosphonate--pyruvate transaminase (362 aa).

Position 193 is an N6-(pyridoxal phosphate)lysine (Lys-193).

This sequence belongs to the class-V pyridoxal-phosphate-dependent aminotransferase family. PhnW subfamily. In terms of assembly, homodimer. Pyridoxal 5'-phosphate is required as a cofactor.

The enzyme catalyses (2-aminoethyl)phosphonate + pyruvate = phosphonoacetaldehyde + L-alanine. In terms of biological role, involved in phosphonate degradation. The protein is 2-aminoethylphosphonate--pyruvate transaminase of Bacteroides fragilis (strain YCH46).